The primary structure comprises 597 residues: uncharacterized protein (597 aa).

Helical transmembrane passes span 4–23 (LLLALLLCLAVGTAGGFKIV) and 209–231 (FVSVSAPGFVGVTAAMSSAGIAI).

It is found in the cell membrane. This is an uncharacterized protein from Archaeoglobus fulgidus (strain ATCC 49558 / DSM 4304 / JCM 9628 / NBRC 100126 / VC-16).